A 478-amino-acid polypeptide reads, in one-letter code: CDK5 and ABL1 enzyme substrate 2 (478 aa).

Residues 1–121 (MAAAAAGGAP…GLGLDGQRQR (121 aa)) form a disordered region. Residues 11–24 (GPAPGPAGPPPPAA) are compositionally biased toward pro residues. A compositionally biased stretch (low complexity) spans 25 to 35 (PTSAARAPPQA). The span at 36 to 46 (LRRRGDSRRRQ) shows a compositional bias: basic residues. The span at 69 to 92 (EKPPPPPAEAREPPAPPPPEPPTG) shows a compositional bias: pro residues. Phosphoserine is present on residues serine 130 and serine 208. A disordered region spans residues 257-296 (SDSHGLLPTPRPSVPRTLPGSRHKPAPTKSAPASTELGSD).

The protein belongs to the cyclin family. Binds to CDK3, CDK5 and ABL1. The C-terminal cyclin-box-like region binds to CDK5.

Its function is as follows. Unknown. Probably involved in G1-S cell cycle transition. In Homo sapiens (Human), this protein is CDK5 and ABL1 enzyme substrate 2 (CABLES2).